The chain runs to 85 residues: 4-hydroxyphenylacetate decarboxylase small subunit (85 aa).

The [4Fe-4S] cluster site is built by His-4, Cys-7, Cys-20, Cys-34, Cys-43, Cys-46, Cys-60, and Cys-78.

It belongs to the HPA decarboxylase small subunit family. Heterooctamer consisting of 4 large (HpdB) subunits and 4 small (HpdC) subunits, arranged as a tetramer of heterodimers. [4Fe-4S] cluster is required as a cofactor.

The enzyme catalyses 4-hydroxyphenylacetate + H(+) = 4-methylphenol + CO2. It carries out the reaction 3,4-dihydroxyphenylacetate + H(+) = 4-methylcatechol + CO2. Its function is as follows. Component of the HPA decarboxylase that decarboxylates phenylacetates with a hydroxyl group in the p-position. Active toward 4-hydroxyphenylacetate and 3,4-dihydroxyphenylacetate, forming 4-methylphenol and 4-methylcatechol, respectively. Is likely involved in the catabolism of aromatic amino acids such as tyrosine fermentation. 4-methylphenol (p-cresol) formation provides metabolic toxicity, which allows an active suppression of other microbes and may provide growth advantages for the producers in highly competitive environments. The small subunit is essential for enzymatic activity of HPA decarboxylase, and also seems to be involved in the regulation of the enzyme oligomeric state and catalytic activity. In Clostridioides difficile (strain 630) (Peptoclostridium difficile), this protein is 4-hydroxyphenylacetate decarboxylase small subunit.